Here is a 168-residue protein sequence, read N- to C-terminus: Ribosome maturation factor RimP (168 aa).

This sequence belongs to the RimP family.

Its subcellular location is the cytoplasm. Required for maturation of 30S ribosomal subunits. This Bordetella bronchiseptica (strain ATCC BAA-588 / NCTC 13252 / RB50) (Alcaligenes bronchisepticus) protein is Ribosome maturation factor RimP.